Here is a 450-residue protein sequence, read N- to C-terminus: FERM domain-containing protein 8 (450 aa).

The FERM domain occupies 28–373 (MDVIVYLIND…YCIELSQTTE (346 aa)).

It localises to the cytoplasm. The protein localises to the cytosol. Its subcellular location is the cell membrane. In terms of biological role, promotes the cell surface stability of RHBDF1 and RHBDF2 and prevents their degradation via the endolysosomal pathway. By acting on RHBDF proteins, involved in ADAM17-mediated ligand shedding. May negatively regulate Wnt signaling. This Xenopus tropicalis (Western clawed frog) protein is FERM domain-containing protein 8 (frmd8).